The sequence spans 500 residues: NAD(P)H-quinone oxidoreductase chain 4, chloroplastic (500 aa).

Helical transmembrane passes span 4–24 (FPWLTIIVVLPIFAGSSIFFL), 37–57 (ICICLLELLLTTYTFCYHFQL), 84–104 (GLSIGPILLTGFITTLATLAA), 111–129 (SRLFHFLMLAMYSGQIGSF), 134–154 (LLLFFIMWELELIPVYLLLSM), 167–187 (FILYTAGGSIFLLMGIPGMGL), 208–228 (ALEILFYFGFLIAYAVKSPII), 242–262 (HYSTCMLLAGILLKMGAYGLV), 272–292 (AHSIFSPWLMIVGTIQVIYAA), 305–325 (IAYSSVSHMAFIIIGIGSITD), 330–350 (GAILQIISHGFIGAALFFLAG), 374–396 (IFTMFSSFSMASLALPGMSGFVA), 411–431 (FFMPKILITFVMAIGMILTPI), and 462–482 (LFVSICIFLPVIGIGIYPDFV).

This sequence belongs to the complex I subunit 4 family.

Its subcellular location is the plastid. It localises to the chloroplast thylakoid membrane. The enzyme catalyses a plastoquinone + NADH + (n+1) H(+)(in) = a plastoquinol + NAD(+) + n H(+)(out). It catalyses the reaction a plastoquinone + NADPH + (n+1) H(+)(in) = a plastoquinol + NADP(+) + n H(+)(out). The polypeptide is NAD(P)H-quinone oxidoreductase chain 4, chloroplastic (Chloranthus spicatus (Chulantree)).